The chain runs to 327 residues: MQHLEEIIASASTAIEAAESLVALDEVRVQYLGKKGELTAQLQSLGKLPPEERREAGQEINKAKGVVQQAIAARKDALQSAELEAKLAAETIDVTLPGRRIENGGLHPVTRTVERIEKFFGELGFNTEAGPEIEDAFHNFDALNIAADHPARTDHDTFFFNPDLMLRTHTSGVQIRTMENGKPPFRFIAPGRVYRNDYDQTHTPMFHQVEGMLVDENVNFAQLKGILHDFLCNFFEEEVEVRFRPSYFPFTEPSAEVDVKGKNGKWLEVLGCGMVHPNVLRSVGIDPEKYSGFAFGMGVERLTMLRYGVNDLRAFFENDLRFLKQFK.

Residue E252 coordinates Mg(2+).

The protein belongs to the class-II aminoacyl-tRNA synthetase family. Phe-tRNA synthetase alpha subunit type 1 subfamily. In terms of assembly, tetramer of two alpha and two beta subunits. Mg(2+) is required as a cofactor.

It is found in the cytoplasm. It carries out the reaction tRNA(Phe) + L-phenylalanine + ATP = L-phenylalanyl-tRNA(Phe) + AMP + diphosphate + H(+). The chain is Phenylalanine--tRNA ligase alpha subunit from Vibrio parahaemolyticus serotype O3:K6 (strain RIMD 2210633).